A 1507-amino-acid polypeptide reads, in one-letter code: Chromatin-remodeling ATPase INO80 (1507 aa).

Disordered stretches follow at residues 30–82 (PEDE…DAED) and 428–452 (RKKQ…KRQQ). A compositionally biased stretch (polar residues) spans 38-67 (GSSSQDESRSTQGGVVANYSNGSKSRMNAS). The DBINO domain maps to 350–475 (AWINIVRRDI…SHFMQNKTDS (126 aa)). Residues 428 to 450 (RKKQEKEAAEAFKREQEQRESKR) show a composition bias toward basic and acidic residues. The 172-residue stretch at 598 to 769 (VNCYEQGLNG…WALLHFIMPM (172 aa)) folds into the Helicase ATP-binding domain. Position 611 to 618 (611 to 618 (DEMGLGKT)) interacts with ATP. The 151-residue stretch at 1210 to 1360 (TLDILLKRLR…QLVMTGGHVQ (151 aa)) folds into the Helicase C-terminal domain. The tract at residues 1415-1507 (LEELEDVDRQ…KGFDPSSSAN (93 aa)) is disordered. Over residues 1491–1507 (ASVTESNKGFDPSSSAN) the composition is skewed to polar residues.

The protein belongs to the SNF2/RAD54 helicase family. As to quaternary structure, component of the INO80 chromatin-remodeling complex. Associates with REF6/EIN6.

The protein localises to the nucleus. The enzyme catalyses ATP + H2O = ADP + phosphate + H(+). In terms of biological role, ATPase component of the chromatin remodeling INO80 complex which is involved in transcriptional regulation, DNA replication and DNA repair. Binds DNA. As part of the INO80 complex, remodels chromatin by shifting nucleosomes. The INO80 complex controls ethylene-induced H2A.Z eviction dynamics. Positive regulator of homologous recombination, but not an essential component of homologous recombination. Not involved in the illegitimate repair pathway. This chain is Chromatin-remodeling ATPase INO80, found in Arabidopsis thaliana (Mouse-ear cress).